A 249-amino-acid polypeptide reads, in one-letter code: GTP cyclohydrolase 1 type 2 homolog (249 aa).

A divalent metal cation contacts are provided by His64, His65, Asp102, His217, and Glu221.

Belongs to the GTP cyclohydrolase I type 2/NIF3 family. Homohexamer.

This Neisseria meningitidis serogroup A / serotype 4A (strain DSM 15465 / Z2491) protein is GTP cyclohydrolase 1 type 2 homolog.